Here is a 418-residue protein sequence, read N- to C-terminus: Gamma-glutamyl phosphate reductase (418 aa).

Belongs to the gamma-glutamyl phosphate reductase family.

The protein localises to the cytoplasm. It carries out the reaction L-glutamate 5-semialdehyde + phosphate + NADP(+) = L-glutamyl 5-phosphate + NADPH + H(+). It participates in amino-acid biosynthesis; L-proline biosynthesis; L-glutamate 5-semialdehyde from L-glutamate: step 2/2. Functionally, catalyzes the NADPH-dependent reduction of L-glutamate 5-phosphate into L-glutamate 5-semialdehyde and phosphate. The product spontaneously undergoes cyclization to form 1-pyrroline-5-carboxylate. In Geobacter sp. (strain M21), this protein is Gamma-glutamyl phosphate reductase.